The chain runs to 1522 residues: Histone-lysine N-methyltransferase EZH2 (1522 aa).

Residues 1–196 form a disordered region; that stretch reads MSPARGDANA…PKTPTPKNTE (196 aa). Positions 39–61 are enriched in basic and acidic residues; the sequence is NRENLRDRDRADKLEKLEKDAHA. Low complexity-rich tracts occupy residues 64 to 76 and 103 to 130; these read QTQT…PVTV and RGST…SPSL. Residues 141-162 are compositionally biased toward polar residues; it reads ILASRTSRFSNRTGIRDSQSPS. Low complexity predominate over residues 180–195; the sequence is ATSNTPAPKTPTPKNT. The segment at 190-220 is SBD domain; sequence PTPKNTEWTVDKIASALSVLAEEVPQNHSRL. Residues 221–250 form an EBD domain region; sequence VNFLLEETEKRAPQPRHLSKTDPFAHMKSK. A BAM domain region spans residues 251–300; sequence AIDANRPRPEGVPTMDVKFKQHSGEYGKSRNSGRRFQYPVVCIKPDREPV. The segment at 301–320 is SAL domain; the sequence is PPYRFHHAEIRKNILALNSQ. The tract at residues 321 to 360 is SRM domain; the sequence is LNFVPHLRDVDPNSAEEQKYSAWLMDLENLDSKSGFKIQP. Positions 361-480 are SANT1L domain; the sequence is RSQKIAKRAQ…PIFDNKRAKD (120 aa). Residues 406–426 are disordered; that stretch reads PESDDSMTPQQKSNLLDTYSD. Polar residues predominate over residues 411-422; the sequence is SMTPQQKSNLLD. The MCSS domain stretch occupies residues 481 to 560; sequence APGSQKPPDE…EQRQKTEGGS (80 aa). The Zn(2+) site is built by cysteine 508, cysteine 511, cysteine 516, histidine 518, cysteine 570, cysteine 574, cysteine 615, cysteine 625, cysteine 685, histidine 687, cysteine 691, cysteine 697, cysteine 699, cysteine 709, cysteine 713, cysteine 715, cysteine 720, cysteine 727, cysteine 729, cysteine 736, cysteine 746, cysteine 748, cysteine 755, cysteine 760, cysteine 763, and cysteine 784. The SANT2L domain stretch occupies residues 561 to 650; that stretch reads ANAPPAHPPC…PVEPRTIPKQ (90 aa). The CXC domain maps to 658–780; sequence RRKKQLMSDW…PENAYDEVLH (123 aa). The SET domain maps to 795–919; that stretch reads KAVVLGKSQL…AGEELFFNYG (125 aa). Positions 809, 852, 854, and 855 each coordinate S-adenosyl-L-homocysteine. Positions 809, 852, 854, 855, 880, 881, and 926 each coordinate S-adenosyl-L-methionine. An S-adenosyl-L-homocysteine-binding site is contributed by histidine 881. Position 927 (lysine 927) interacts with S-adenosyl-L-homocysteine. The disordered stretch occupies residues 933-1522; it reads NEQSGAETTP…KPARYRDEGE (590 aa). Over residues 935-946 the composition is skewed to polar residues; that stretch reads QSGAETTPQQPK. A compositionally biased stretch (acidic residues) spans 971-988; it reads GFDDDDRDGNDSDPDDLW. The span at 992–1024 shows a compositional bias: low complexity; it reads QQQQQQQQQQQQQQQQQQQQQQQQQQQQQQQQQ. Over residues 1025 to 1038 the composition is skewed to polar residues; sequence AQKPQPSTSHQPQS. Basic and acidic residues predominate over residues 1053 to 1066; it reads SPDKQLRRENHDAQ. The segment covering 1072 to 1091 has biased composition (low complexity); the sequence is QFQQQEQQQQQQQQQQQQQQ. Positions 1127–1136 are enriched in polar residues; that stretch reads DSSSGGSANE. The segment covering 1142-1162 has biased composition (basic residues); sequence KPSRRGGARPGAGRKPKHRPP. 2 stretches are compositionally biased toward basic and acidic residues: residues 1207 to 1221 and 1228 to 1238; these read SDSK…TDKE and VNEKDREKGRD. A compositionally biased stretch (low complexity) spans 1255 to 1299; sequence KSAPSPAKKQASSPTKISDSNRTTSKNTSSNNNNNTNNNNNNNNN. The segment covering 1316-1330 has biased composition (polar residues); that stretch reads HLTNSQPAALSPSAT. Low complexity-rich tracts occupy residues 1355–1385 and 1415–1428; these read STMT…SSSS and SSSL…SVFS. Residues 1455 to 1464 show a composition bias toward polar residues; sequence SGLNSTSLSQ. Over residues 1465–1494 the composition is skewed to basic and acidic residues; the sequence is ERGEKHEKHEKEKPKEKKGEKERERERDRS.

It belongs to the class V-like SAM-binding methyltransferase superfamily. Histone-lysine methyltransferase family. EZ subfamily. As to quaternary structure, component of the polycomb repressive complex 2 (PRC2) that consists of four core subunits icluding EZH2, EED, SUZ12, and RBBP4, among which EZH2 is the catalytic subunit and which minimally requires EED and SUZ12 for catalysis.

The protein resides in the nucleus. It catalyses the reaction L-lysyl(27)-[histone H3] + 3 S-adenosyl-L-methionine = N(6),N(6),N(6)-trimethyl-L-lysyl(27)-[histone H3] + 3 S-adenosyl-L-homocysteine + 3 H(+). With respect to regulation, the end product of PRC2 catalysis, H3K27me3, interacts with EED to stimulate the enzymatic activity of PRC2 allosterically. The enzymatic activity of PRC2 is regulated in a very complex manner and PCR2 can adopt different stages including the autoinhibited (A); SAM-bound autoinhibited (A'), basal (B), and H3K27me3-stimulated (S) stages. Actictivity is inhibited by pyridone inhibitors such as GSK126. In terms of biological role, catalytic subunit of the of the Polycomb Repressive Complex 2 (PRC2), a histone H3 lysine methyltransferase responsible for generating mono-, di-, and tri-methylation on Lys27 (H3K27me1, H3K27me2 and H3K27me3). The tri-methylated form is known to be critical in gene repression, and its proper placement is essential in defining repression patterns during development. The PRC2 complex interacts with thousands of RNA species in vivo, but the physiological function of RNA binding has still to be determined. The chain is Histone-lysine N-methyltransferase EZH2 from Chaetomium thermophilum (strain DSM 1495 / CBS 144.50 / IMI 039719) (Thermochaetoides thermophila).